The primary structure comprises 605 residues: DNA mismatch repair protein MutL (605 aa).

Belongs to the DNA mismatch repair MutL/HexB family.

In terms of biological role, this protein is involved in the repair of mismatches in DNA. It is required for dam-dependent methyl-directed DNA mismatch repair. May act as a 'molecular matchmaker', a protein that promotes the formation of a stable complex between two or more DNA-binding proteins in an ATP-dependent manner without itself being part of a final effector complex. This Pelotomaculum thermopropionicum (strain DSM 13744 / JCM 10971 / SI) protein is DNA mismatch repair protein MutL.